Consider the following 465-residue polypeptide: uncharacterized protein (465 aa).

The next 11 membrane-spanning stretches (helical) occupy residues 19-39 (VLGPAHVWALGVGIVLVGEYM), 50-70 (MIAGLMACWVAGLLYTCVAMI), 91-111 (IVGPLMAFNVGLFLVMAYTML), 140-160 (FIVLAIMFLAWLNYRGVLATL), 164-184 (LVITAIAFLAIVALFVSVQFG), 201-221 (PYGWVGIVASLHFGLWYYLGI), 244-264 (AGIMTLLIAATMTWYICSGLM), 288-308 (LMVLLFVGTAFATLASANGCI), 342-362 (IVFLVPIALIFALGAPLDQVV), 363-383 (TFSILSGLLGYTFMTFNMVMF), and 403-423 (LPTVVLLILCSTAYFAVFLGY).

This sequence belongs to the amino acid-polyamine-organocation (APC) superfamily.

The protein localises to the cell membrane. Functionally, probable amino-acid or metabolite transport protein. This is an uncharacterized protein from Rhizobium meliloti (strain 1021) (Ensifer meliloti).